The primary structure comprises 1516 residues: Neurite extension and migration factor (1516 aa).

The span at 380–405 shows a compositional bias: basic and acidic residues; it reads LDKKKGKEEGQEDKGVEKKDGKDNGE. 5 disordered regions span residues 380–440, 589–610, 1158–1225, 1373–1419, and 1437–1479; these read LDKK…GSFS, QKKK…SQKQ, TFND…STKK, TPQE…PGYN, and LGNN…ESGT. Composition is skewed to polar residues over residues 596–610, 1158–1170, and 1185–1194; these read NTNT…SQKQ, TFND…STNN, and GAMNQSSSQK. A compositionally biased stretch (basic residues) spans 1443–1453; it reads THKKLYRHKSS. A compositionally biased stretch (basic and acidic residues) spans 1456–1479; sequence ALRDEKCKGKHMEREQVHKDESGT.

As to expression, highly expressed in fetal and adult brain, predominantly in the cerebral cortex and the cerebellum. Also expressed in other tissues but to a lesser extent.

Its subcellular location is the nucleus. It localises to the cytoplasm. Involved in neurite outgrowth by regulating cell-cell adhesion via the N-cadherin signaling pathway. May act by regulating expression of protein-coding genes, such as N-cadherins and integrin beta-1 (ITGB1). In Homo sapiens (Human), this protein is Neurite extension and migration factor.